The following is a 1436-amino-acid chain: tRNA (guanosine(18)-2'-O)-methyltransferase (1436 aa).

S-adenosyl-L-methionine is bound by residues 1365 to 1367, G1389, and 1409 to 1418; these read LEQ and IQQFGVIRSM.

It belongs to the class IV-like SAM-binding methyltransferase superfamily. RNA methyltransferase TrmH family.

The protein localises to the cytoplasm. The catalysed reaction is guanosine(18) in tRNA + S-adenosyl-L-methionine = 2'-O-methylguanosine(18) in tRNA + S-adenosyl-L-homocysteine + H(+). Its function is as follows. S-adenosyl-L-methionine-dependent 2'-O-ribose methyltransferase that catalyzes the formation of 2'-O-methylguanosine at position 18 (Gm18) in various tRNAs. This is tRNA (guanosine(18)-2'-O)-methyltransferase from Saccharomyces cerevisiae (strain ATCC 204508 / S288c) (Baker's yeast).